The primary structure comprises 287 residues: rRNA adenine N-6-methyltransferase (287 aa).

The segment covering 1–13 has biased composition (basic residues); sequence MKKKNHKYRGKKL. The interval 1–21 is disordered; it reads MKKKNHKYRGKKLNRGESPNF. 6 residues coordinate S-adenosyl-L-methionine: His25, Met27, Gly52, Glu73, Asp98, and Asn114.

It belongs to the class I-like SAM-binding methyltransferase superfamily. rRNA adenine N(6)-methyltransferase family.

Functionally, involved in erythromycin resistance. This chain is rRNA adenine N-6-methyltransferase (ermD), found in Bacillus licheniformis.